We begin with the raw amino-acid sequence, 334 residues long: Glycerol-1-phosphate dehydrogenase [NAD(P)+] (334 aa).

Residues G77–D81 and T99–S102 each bind NAD(+). D104 is a binding site for substrate. S108 is a binding site for NAD(+). D147 is a substrate binding site. Zn(2+) contacts are provided by D147 and H225. H229 is a substrate binding site. H246 contributes to the Zn(2+) binding site.

It belongs to the glycerol-1-phosphate dehydrogenase family. Zn(2+) serves as cofactor.

Its subcellular location is the cytoplasm. It catalyses the reaction sn-glycerol 1-phosphate + NAD(+) = dihydroxyacetone phosphate + NADH + H(+). The catalysed reaction is sn-glycerol 1-phosphate + NADP(+) = dihydroxyacetone phosphate + NADPH + H(+). The protein operates within membrane lipid metabolism; glycerophospholipid metabolism. In terms of biological role, catalyzes the NAD(P)H-dependent reduction of dihydroxyacetonephosphate (DHAP or glycerone phosphate) to glycerol 1-phosphate (G1P). The G1P thus generated is used as the glycerophosphate backbone of phospholipids in the cellular membranes of Archaea. The sequence is that of Glycerol-1-phosphate dehydrogenase [NAD(P)+] from Methanococcus maripaludis (strain DSM 14266 / JCM 13030 / NBRC 101832 / S2 / LL).